Consider the following 328-residue polypeptide: Alanine racemase (328 aa).

K33 (proton acceptor; specific for D-alanine) is an active-site residue. K33 carries the post-translational modification N6-(pyridoxal phosphate)lysine. R118 provides a ligand contact to substrate. Y237 serves as the catalytic Proton acceptor; specific for L-alanine. Substrate is bound at residue M283.

This sequence belongs to the alanine racemase family. Pyridoxal 5'-phosphate serves as cofactor.

The enzyme catalyses L-alanine = D-alanine. Its pathway is amino-acid biosynthesis; D-alanine biosynthesis; D-alanine from L-alanine: step 1/1. Its function is as follows. Catalyzes the interconversion of L-alanine and D-alanine. May also act on other amino acids. This chain is Alanine racemase (alr), found in Campylobacter jejuni subsp. jejuni serotype O:23/36 (strain 81-176).